Here is a 464-residue protein sequence, read N- to C-terminus: Argininosuccinate lyase (464 aa).

Belongs to the lyase 1 family. Argininosuccinate lyase subfamily.

Its subcellular location is the cytoplasm. It carries out the reaction 2-(N(omega)-L-arginino)succinate = fumarate + L-arginine. Its pathway is amino-acid biosynthesis; L-arginine biosynthesis; L-arginine from L-ornithine and carbamoyl phosphate: step 3/3. In Pseudomonas syringae pv. syringae (strain B728a), this protein is Argininosuccinate lyase.